Consider the following 395-residue polypeptide: L-lactate dehydrogenase (395 aa).

The FMN hydroxy acid dehydrogenase domain occupies 1-380 (MIISAASDYR…SKDSLVQELS (380 aa)). Tyr-24 serves as a coordination point for substrate. The FMN site is built by Ser-106 and Gln-127. A substrate-binding site is contributed by Tyr-129. Position 155 (Thr-155) interacts with FMN. Position 164 (Arg-164) interacts with substrate. Lys-251 serves as a coordination point for FMN. The Proton acceptor role is filled by His-275. Residue Arg-278 participates in substrate binding. 306–330 (DSGIRNGLDVVRMIALGADSVLLGR) lines the FMN pocket.

Belongs to the FMN-dependent alpha-hydroxy acid dehydrogenase family. It depends on FMN as a cofactor.

The protein localises to the cell inner membrane. It catalyses the reaction (S)-lactate + A = pyruvate + AH2. In terms of biological role, catalyzes the conversion of L-lactate to pyruvate. Is coupled to the respiratory chain. This chain is L-lactate dehydrogenase, found in Enterobacter sp. (strain 638).